Consider the following 638-residue polypeptide: 1-deoxy-D-xylulose-5-phosphate synthase (638 aa).

Thiamine diphosphate-binding positions include His79 and 120–122; that span reads AHS. Asp151 is a Mg(2+) binding site. Thiamine diphosphate contacts are provided by residues 152 to 153, Asn180, Tyr289, and Glu371; that span reads GA. Asn180 contributes to the Mg(2+) binding site.

Belongs to the transketolase family. DXPS subfamily. As to quaternary structure, homodimer. Mg(2+) is required as a cofactor. The cofactor is thiamine diphosphate.

The enzyme catalyses D-glyceraldehyde 3-phosphate + pyruvate + H(+) = 1-deoxy-D-xylulose 5-phosphate + CO2. Its pathway is metabolic intermediate biosynthesis; 1-deoxy-D-xylulose 5-phosphate biosynthesis; 1-deoxy-D-xylulose 5-phosphate from D-glyceraldehyde 3-phosphate and pyruvate: step 1/1. In terms of biological role, catalyzes the acyloin condensation reaction between C atoms 2 and 3 of pyruvate and glyceraldehyde 3-phosphate to yield 1-deoxy-D-xylulose-5-phosphate (DXP). The protein is 1-deoxy-D-xylulose-5-phosphate synthase of Rhizobium etli (strain ATCC 51251 / DSM 11541 / JCM 21823 / NBRC 15573 / CFN 42).